Consider the following 377-residue polypeptide: MHKQLPVICVAAGIVLLAACTNDGGQQQTTVAPQPAVCNGPTVEISGAEPRYEPLNPTANQDYQRDGKSYKIVQDPSRFSQAGLAAIYDAEPGSNLTASGEMFDPMQLTAAHPTLPIPSYARITNLANGRMIVVRINDRGLYGTDRVISLSRAAADRLNTSNNTKVRIDPIIVAPDGSLSGPGMACTTVAKQTYALPPRPDLSGGMGSASSAPAQPQGDVLPVSNSTLKSDDTTGAPVSSSGFLGAPTTLAPGVLEGNEPTPAPQTAPVSAPVTAPATATPVSAPAAAAPVSAPVSAPAAAASGRFVVQVGAVSDQTRAQQYQQRLSQQFSVPGRVIQNGAVWRIQLGPFASKAEASALQQRLQTEAQLQSFIASAQ.

The first 19 residues, 1–19 (MHKQLPVICVAAGIVLLAA), serve as a signal peptide directing secretion. C20 carries the N-palmitoyl cysteine lipid modification. C20 carries S-diacylglycerol cysteine lipidation. The disordered stretch occupies residues 196–277 (LPPRPDLSGG…PVSAPVTAPA (82 aa)). Low complexity-rich tracts occupy residues 208–218 (SASSAPAQPQG) and 264–277 (PQTA…TAPA). Residues 300–376 (AAASGRFVVQ…AQLQSFIASA (77 aa)) enclose the SPOR domain.

Belongs to the RlpA family.

Its subcellular location is the cell membrane. Functionally, lytic transglycosylase with a strong preference for naked glycan strands that lack stem peptides. This Salmonella typhi protein is Endolytic peptidoglycan transglycosylase RlpA.